A 92-amino-acid polypeptide reads, in one-letter code: uncharacterized protein (92 aa).

An N-terminal signal peptide occupies residues 1 to 23 (MNPAIVVIIVLLVAALLIWACKA).

This is an uncharacterized protein from Acheta domesticus (House cricket).